Reading from the N-terminus, the 308-residue chain is D-alanine--D-alanine ligase (308 aa).

The ATP-grasp domain occupies 109–302 (KAAYAAAGLP…FGALCRWIVE (194 aa)). 136–186 (MPPPYVIKPYNEGSSVGVYLVPEGAEAAPELADDLPDTLMVEAFVPGRELT) contacts ATP. 3 residues coordinate Mg(2+): Asp-253, Glu-269, and Asn-271.

Belongs to the D-alanine--D-alanine ligase family. Requires Mg(2+) as cofactor. The cofactor is Mn(2+).

The protein localises to the cytoplasm. The catalysed reaction is 2 D-alanine + ATP = D-alanyl-D-alanine + ADP + phosphate + H(+). The protein operates within cell wall biogenesis; peptidoglycan biosynthesis. Functionally, cell wall formation. The sequence is that of D-alanine--D-alanine ligase from Dinoroseobacter shibae (strain DSM 16493 / NCIMB 14021 / DFL 12).